Reading from the N-terminus, the 411-residue chain is Translation initiation factor 2 subunit gamma (411 aa).

A tr-type G domain is found at glutamine 9–lysine 203. Positions glycine 18–threonine 25 are G1. Mg(2+) contacts are provided by aspartate 21, threonine 25, glycine 46, and threonine 48. Aspartate 21–threonine 26 contacts GTP. A G2 region spans residues glycine 46–lysine 50. Residues cysteine 61, cysteine 64, cysteine 73, and cysteine 76 each coordinate Zn(2+). Residues aspartate 90–glycine 93 form a G3 region. GTP contacts are provided by residues asparagine 146–glutamate 149 and serine 181–leucine 183. The G4 stretch occupies residues asparagine 146–glutamate 149. The G5 stretch occupies residues serine 181–leucine 183.

It belongs to the TRAFAC class translation factor GTPase superfamily. Classic translation factor GTPase family. EIF2G subfamily. As to quaternary structure, heterotrimer composed of an alpha, a beta and a gamma chain. Mg(2+) serves as cofactor.

The enzyme catalyses GTP + H2O = GDP + phosphate + H(+). Its function is as follows. eIF-2 functions in the early steps of protein synthesis by forming a ternary complex with GTP and initiator tRNA. The polypeptide is Translation initiation factor 2 subunit gamma (Pyrococcus furiosus (strain ATCC 43587 / DSM 3638 / JCM 8422 / Vc1)).